Here is a 236-residue protein sequence, read N- to C-terminus: Thioredoxin-like 2-2, chloroplastic (236 aa).

A chloroplast-targeting transit peptide spans 1–82 (MAGVVRLTTT…LRRPKSQVVR (82 aa)). In terms of domain architecture, Thioredoxin spans 83–220 (VKVDENVAET…QLELGITLQT (138 aa)). Active-site nucleophile residues include Cys-135 and Cys-138. Cysteines 135 and 138 form a disulfide.

This sequence belongs to the thioredoxin family.

It localises to the plastid. Its subcellular location is the chloroplast. Its function is as follows. Thiol-disulfide oxidoreductase that may participate in various redox reactions. Possesses insulin disulfide bonds reducing activity. The polypeptide is Thioredoxin-like 2-2, chloroplastic (Arabidopsis thaliana (Mouse-ear cress)).